Reading from the N-terminus, the 159-residue chain is Ribosomal RNA large subunit methyltransferase H (159 aa).

Residues Leu-76, Gly-108, and 127–132 (FGKLTL) contribute to the S-adenosyl-L-methionine site.

Belongs to the RNA methyltransferase RlmH family. In terms of assembly, homodimer.

It localises to the cytoplasm. It carries out the reaction pseudouridine(1915) in 23S rRNA + S-adenosyl-L-methionine = N(3)-methylpseudouridine(1915) in 23S rRNA + S-adenosyl-L-homocysteine + H(+). Its function is as follows. Specifically methylates the pseudouridine at position 1915 (m3Psi1915) in 23S rRNA. This is Ribosomal RNA large subunit methyltransferase H from Latilactobacillus sakei subsp. sakei (strain 23K) (Lactobacillus sakei subsp. sakei).